The sequence spans 217 residues: Ras-related protein RABA5b (217 aa).

19–26 serves as a coordination point for GTP; it reads GDSAVGKS. The Effector region motif lies at 41 to 49; it reads SKATIGVEF. GTP-binding positions include 67 to 71, 125 to 128, and 155 to 156; these read DTAGQ, NKCD, and SA. S-geranylgeranyl cysteine attachment occurs at residues C214 and C215.

The protein belongs to the small GTPase superfamily. Rab family.

The protein resides in the cell membrane. Its function is as follows. Intracellular vesicle trafficking and protein transport. The polypeptide is Ras-related protein RABA5b (RABA5B) (Arabidopsis thaliana (Mouse-ear cress)).